The following is a 30-amino-acid chain: Serum amyloid P-component (30 aa).

Positions 1 to 30 (APQDLSGKMFIFPQETSTANVXLTARSQDF) constitute a Pentraxin (PTX) domain.

It belongs to the pentraxin family. As to quaternary structure, homopentamer. Discoid arrangement of 5 covalently bound subunits. Ca(2+) serves as cofactor.

It localises to the secreted. The sequence is that of Serum amyloid P-component from Anarhichas lupus (Atlantic wolffish).